The chain runs to 368 residues: tRNA-specific 2-thiouridylase MnmA (368 aa).

ATP is bound by residues 11-18 (GMSGGVDS) and M37. The segment at 97 to 99 (NPD) is interaction with target base in tRNA. C102 acts as the Nucleophile in catalysis. C102 and C199 are joined by a disulfide. Residue G127 participates in ATP binding. Residues 149 to 151 (KDQ) form an interaction with tRNA region. The active-site Cysteine persulfide intermediate is C199. An interaction with tRNA region spans residues 311–312 (RY).

It belongs to the MnmA/TRMU family. In terms of assembly, interacts with TusE.

Its subcellular location is the cytoplasm. It catalyses the reaction S-sulfanyl-L-cysteinyl-[protein] + uridine(34) in tRNA + AH2 + ATP = 2-thiouridine(34) in tRNA + L-cysteinyl-[protein] + A + AMP + diphosphate + H(+). Catalyzes the 2-thiolation of uridine at the wobble position (U34) of tRNA(Lys), tRNA(Glu) and tRNA(Gln), leading to the formation of s(2)U34, the first step of tRNA-mnm(5)s(2)U34 synthesis. Sulfur is provided by IscS, via a sulfur-relay system. Binds ATP and its substrate tRNAs. The chain is tRNA-specific 2-thiouridylase MnmA from Klebsiella pneumoniae (strain 342).